The sequence spans 122 residues: MIQQQTMLTVADNTGARKLMCIRVLGSSGRRYASLGDVIVGVVKDALPNMPVKKSDVVKAVVIRTVDTVRRPDGMCIRFDDNAAVIINDDGNPRGTRVFGPVARELREKNFTKIISLAPEVL.

It belongs to the universal ribosomal protein uL14 family. Part of the 50S ribosomal subunit. Forms a cluster with proteins L3 and L19. In the 70S ribosome, L14 and L19 interact and together make contacts with the 16S rRNA in bridges B5 and B8.

Binds to 23S rRNA. Forms part of two intersubunit bridges in the 70S ribosome. This Synechococcus sp. (strain JA-3-3Ab) (Cyanobacteria bacterium Yellowstone A-Prime) protein is Large ribosomal subunit protein uL14.